The following is a 67-amino-acid chain: DNA-directed RNA polymerase subunit omega (67 aa).

Belongs to the RNA polymerase subunit omega family. In terms of assembly, the RNAP catalytic core consists of 2 alpha, 1 beta, 1 beta' and 1 omega subunit. When a sigma factor is associated with the core the holoenzyme is formed, which can initiate transcription.

It carries out the reaction RNA(n) + a ribonucleoside 5'-triphosphate = RNA(n+1) + diphosphate. Its function is as follows. Promotes RNA polymerase assembly. Latches the N- and C-terminal regions of the beta' subunit thereby facilitating its interaction with the beta and alpha subunits. This Paracidovorax citrulli (strain AAC00-1) (Acidovorax citrulli) protein is DNA-directed RNA polymerase subunit omega.